The chain runs to 433 residues: Urokinase-type plasminogen activator (433 aa).

The first 20 residues, 1–20, serve as a signal peptide directing secretion; that stretch reads MKVWLASLFLCALVVKNSEG. An EGF-like domain is found at 28–64; sequence DESNCGCQNGGVCVSYKYFSRIRRCSCPRKFQGEHCE. 6 cysteine pairs are disulfide-bonded: cysteine 32-cysteine 40, cysteine 34-cysteine 52, cysteine 54-cysteine 63, cysteine 71-cysteine 152, cysteine 92-cysteine 134, and cysteine 123-cysteine 147. The binds urokinase plasminogen activator surface receptor stretch occupies residues 35-58; sequence QNGGVCVSYKYFSRIRRCSCPRKF. The Kringle domain maps to 71–152; that stretch reads CYHGNGDSYR…FVQECMVHDC (82 aa). A connecting peptide region spans residues 153–179; sequence SLSKKPSSSVDQQGFQCGQKALRPRFK. A Phosphoserine modification is found at serine 159. Intrachain disulfides connect cysteine 169–cysteine 301, cysteine 211–cysteine 227, cysteine 219–cysteine 290, cysteine 315–cysteine 384, cysteine 347–cysteine 363, and cysteine 374–cysteine 402. The Peptidase S1 domain maps to 180–426; that stretch reads IVGGEFTEVE…FLDWIQSHIG (247 aa). Active-site charge relay system residues include histidine 226 and aspartate 277. Catalysis depends on serine 378, which acts as the Charge relay system.

This sequence belongs to the peptidase S1 family. In terms of assembly, found in high and low molecular mass forms. Each consists of two chains, A and B. The high molecular mass form contains a long chain A which is cleaved to yield a short chain A. Forms heterodimer with SERPINA5. Binds LRP1B; binding is followed by internalization and degradation. Interacts with MRC2. Interacts with PLAUR. In complex with SERPINE1, interacts with PLAUR/uPAR. Interacts with SORL1 and LRP1, either alone or in complex with SERPINE1; these interactions are abolished in the presence of LRPAP1/RAP. The ternary complex composed of PLAUR-PLAU-PAI1 also interacts with SORLA. Produced as an inactive single-chain protein (pro-uPA or sc-uPA), is processed into the active disulfide-linked two-chain form of PLAU/uPA by a proteolytic event mediated, at least, by TMPRSS4.

It is found in the secreted. It catalyses the reaction Specific cleavage of Arg-|-Val bond in plasminogen to form plasmin.. With respect to regulation, inhibited by SERPINA5. Inhibited by SERPINE1. Its function is as follows. Specifically cleaves the zymogen plasminogen to form the active enzyme plasmin. This Mus musculus (Mouse) protein is Urokinase-type plasminogen activator (Plau).